Here is a 430-residue protein sequence, read N- to C-terminus: Enolase (430 aa).

Position 167 (Gln167) interacts with (2R)-2-phosphoglycerate. The active-site Proton donor is the Glu209. The Mg(2+) site is built by Asp246, Glu287, and Asp314. Residues Lys339, Arg368, Ser369, and Lys390 each coordinate (2R)-2-phosphoglycerate. Residue Lys339 is the Proton acceptor of the active site.

It belongs to the enolase family. Mg(2+) is required as a cofactor.

The protein localises to the cytoplasm. Its subcellular location is the secreted. The protein resides in the cell surface. It catalyses the reaction (2R)-2-phosphoglycerate = phosphoenolpyruvate + H2O. It functions in the pathway carbohydrate degradation; glycolysis; pyruvate from D-glyceraldehyde 3-phosphate: step 4/5. Catalyzes the reversible conversion of 2-phosphoglycerate (2-PG) into phosphoenolpyruvate (PEP). It is essential for the degradation of carbohydrates via glycolysis. The polypeptide is Enolase (Prochlorococcus marinus subsp. pastoris (strain CCMP1986 / NIES-2087 / MED4)).